Consider the following 299-residue polypeptide: 33 kDa chaperonin (299 aa).

Intrachain disulfides connect Cys239/Cys241 and Cys272/Cys275.

The protein belongs to the HSP33 family. Post-translationally, under oxidizing conditions two disulfide bonds are formed involving the reactive cysteines. Under reducing conditions zinc is bound to the reactive cysteines and the protein is inactive.

Its subcellular location is the cytoplasm. Functionally, redox regulated molecular chaperone. Protects both thermally unfolding and oxidatively damaged proteins from irreversible aggregation. Plays an important role in the bacterial defense system toward oxidative stress. The sequence is that of 33 kDa chaperonin from Acaryochloris marina (strain MBIC 11017).